Consider the following 168-residue polypeptide: MSAPIGATRAERWTLLAIGVASFELVAGALWIQLAWQEDPCPLCIIQRYLFLLIALFTFVAAAGGRRVALLRVLSLTTALAGAAVAVRHIYVQAHPGFSCGFDALQPVIDSLPPAHWLPPVFKVGGLCETLYPPILGLSLPMWALVGFSAIAVALGWRIRAQAVIRTA.

At 1–14 the chain is on the cytoplasmic side; sequence MSAPIGATRAERWT. A helical membrane pass occupies residues 15–31; it reads LLAIGVASFELVAGALW. Over 32-49 the chain is Periplasmic; that stretch reads IQLAWQEDPCPLCIIQRY. C41 and C44 are disulfide-bonded. Residues 50-64 form a helical membrane-spanning segment; the sequence is LFLLIALFTFVAAAG. The Cytoplasmic segment spans residues 65-69; sequence GRRVA. The chain crosses the membrane as a helical span at residues 70-87; that stretch reads LLRVLSLTTALAGAAVAV. At 88 to 142 the chain is on the periplasmic side; sequence RHIYVQAHPGFSCGFDALQPVIDSLPPAHWLPPVFKVGGLCETLYPPILGLSLPM. An intrachain disulfide couples C100 to C128. The helical transmembrane segment at 143 to 161 threads the bilayer; it reads WALVGFSAIAVALGWRIRA. Over 162–168 the chain is Cytoplasmic; it reads QAVIRTA.

It belongs to the DsbB family.

The protein localises to the cell inner membrane. Its function is as follows. Required for disulfide bond formation in some periplasmic proteins. Acts by oxidizing the DsbA protein. This chain is Disulfide bond formation protein B 2, found in Burkholderia lata (strain ATCC 17760 / DSM 23089 / LMG 22485 / NCIMB 9086 / R18194 / 383).